Consider the following 209-residue polypeptide: MPEHAAPSYPFVYLASQSPRRRELLDQLGVRYELLAPAPDEDAEALEAELPGEAPDHYVLRVCVAKAQAARARLVARGLPAAPVLVADTTVTIDGAILGKPADAADALAMLARLAGRTHDVLTALAVIDATGELMPPALSRSAVRFAPAAREALARYVETGEPFGKAGAYAIQGRAAEFVERIDGSHSGIMGLPLFETAALLRAAHVAF.

Residue aspartate 88 is the Proton acceptor of the active site.

The protein belongs to the Maf family. YhdE subfamily. The cofactor is a divalent metal cation.

Its subcellular location is the cytoplasm. It catalyses the reaction dTTP + H2O = dTMP + diphosphate + H(+). The catalysed reaction is UTP + H2O = UMP + diphosphate + H(+). Nucleoside triphosphate pyrophosphatase that hydrolyzes dTTP and UTP. May have a dual role in cell division arrest and in preventing the incorporation of modified nucleotides into cellular nucleic acids. The polypeptide is dTTP/UTP pyrophosphatase (Burkholderia mallei (strain ATCC 23344)).